A 240-amino-acid chain; its full sequence is Ribosomal RNA small subunit methyltransferase I (240 aa).

This sequence belongs to the methyltransferase superfamily. RsmI family.

The protein localises to the cytoplasm. The enzyme catalyses cytidine(1402) in 16S rRNA + S-adenosyl-L-methionine = 2'-O-methylcytidine(1402) in 16S rRNA + S-adenosyl-L-homocysteine + H(+). In terms of biological role, catalyzes the 2'-O-methylation of the ribose of cytidine 1402 (C1402) in 16S rRNA. The protein is Ribosomal RNA small subunit methyltransferase I of Leptospira biflexa serovar Patoc (strain Patoc 1 / ATCC 23582 / Paris).